Consider the following 514-residue polypeptide: Putative ribose/galactose/methyl galactoside import ATP-binding protein 3 (514 aa).

ABC transporter domains follow at residues Leu-21–Thr-256 and Val-267–Ser-512. ATP is bound at residue Gly-53–Ser-60.

Belongs to the ABC transporter superfamily. Carbohydrate importer 2 (CUT2) (TC 3.A.1.2) family.

It is found in the cell inner membrane. It catalyses the reaction D-ribose(out) + ATP + H2O = D-ribose(in) + ADP + phosphate + H(+). It carries out the reaction D-galactose(out) + ATP + H2O = D-galactose(in) + ADP + phosphate + H(+). Part of an ABC transporter complex involved in carbohydrate import. Could be involved in ribose, galactose and/or methyl galactoside import. Responsible for energy coupling to the transport system. The polypeptide is Putative ribose/galactose/methyl galactoside import ATP-binding protein 3 (Burkholderia cenocepacia (strain HI2424)).